Consider the following 354-residue polypeptide: GTPase Obg (354 aa).

Residues Met1 to Leu159 form the Obg domain. One can recognise an OBG-type G domain in the interval Ala160–Phe333. GTP-binding positions include Gly166–Ser173, Phe191–Thr195, Asp212–Gly215, Thr283–Asp286, and Ser314–Val316. 2 residues coordinate Mg(2+): Ser173 and Thr193.

It belongs to the TRAFAC class OBG-HflX-like GTPase superfamily. OBG GTPase family. As to quaternary structure, monomer. Mg(2+) is required as a cofactor.

It localises to the cytoplasm. In terms of biological role, an essential GTPase which binds GTP, GDP and possibly (p)ppGpp with moderate affinity, with high nucleotide exchange rates and a fairly low GTP hydrolysis rate. Plays a role in control of the cell cycle, stress response, ribosome biogenesis and in those bacteria that undergo differentiation, in morphogenesis control. This is GTPase Obg from Anaeromyxobacter dehalogenans (strain 2CP-1 / ATCC BAA-258).